A 112-amino-acid polypeptide reads, in one-letter code: Nucleoid-associated protein FTW_0607 (112 aa).

Residues 1-27 (MNFDMSKLMQQAQKMQEQMKKAQQERE) form a disordered region. The span at 17-27 (EQMKKAQQERE) shows a compositional bias: basic and acidic residues.

It belongs to the YbaB/EbfC family. As to quaternary structure, homodimer.

It is found in the cytoplasm. Its subcellular location is the nucleoid. In terms of biological role, binds to DNA and alters its conformation. May be involved in regulation of gene expression, nucleoid organization and DNA protection. The chain is Nucleoid-associated protein FTW_0607 from Francisella tularensis subsp. tularensis (strain WY96-3418).